The sequence spans 504 residues: Histidine--tRNA ligase (504 aa).

This sequence belongs to the class-II aminoacyl-tRNA synthetase family. As to quaternary structure, homodimer.

It is found in the cytoplasm. It catalyses the reaction tRNA(His) + L-histidine + ATP = L-histidyl-tRNA(His) + AMP + diphosphate + H(+). The protein is Histidine--tRNA ligase (hisS) of Rhizobium meliloti (strain 1021) (Ensifer meliloti).